Consider the following 313-residue polypeptide: Methionyl-tRNA formyltransferase (313 aa).

Position 113 to 116 (Ser-113 to Pro-116) interacts with (6S)-5,6,7,8-tetrahydrofolate.

This sequence belongs to the Fmt family.

It carries out the reaction L-methionyl-tRNA(fMet) + (6R)-10-formyltetrahydrofolate = N-formyl-L-methionyl-tRNA(fMet) + (6S)-5,6,7,8-tetrahydrofolate + H(+). Functionally, attaches a formyl group to the free amino group of methionyl-tRNA(fMet). The formyl group appears to play a dual role in the initiator identity of N-formylmethionyl-tRNA by promoting its recognition by IF2 and preventing the misappropriation of this tRNA by the elongation apparatus. The chain is Methionyl-tRNA formyltransferase from Francisella tularensis subsp. mediasiatica (strain FSC147).